The sequence spans 158 residues: Transcription elongation factor GreA (158 aa).

This sequence belongs to the GreA/GreB family.

Its function is as follows. Necessary for efficient RNA polymerase transcription elongation past template-encoded arresting sites. The arresting sites in DNA have the property of trapping a certain fraction of elongating RNA polymerases that pass through, resulting in locked ternary complexes. Cleavage of the nascent transcript by cleavage factors such as GreA or GreB allows the resumption of elongation from the new 3'terminus. GreA releases sequences of 2 to 3 nucleotides. This chain is Transcription elongation factor GreA, found in Pseudomonas syringae pv. tomato (strain ATCC BAA-871 / DC3000).